A 250-amino-acid chain; its full sequence is Biosynthetic peptidoglycan transglycosylase (250 aa).

A helical membrane pass occupies residues 15–35 (AVLLFFVSSLGFVLLYRFVPV).

It belongs to the glycosyltransferase 51 family.

The protein localises to the cell inner membrane. It carries out the reaction [GlcNAc-(1-&gt;4)-Mur2Ac(oyl-L-Ala-gamma-D-Glu-L-Lys-D-Ala-D-Ala)](n)-di-trans,octa-cis-undecaprenyl diphosphate + beta-D-GlcNAc-(1-&gt;4)-Mur2Ac(oyl-L-Ala-gamma-D-Glu-L-Lys-D-Ala-D-Ala)-di-trans,octa-cis-undecaprenyl diphosphate = [GlcNAc-(1-&gt;4)-Mur2Ac(oyl-L-Ala-gamma-D-Glu-L-Lys-D-Ala-D-Ala)](n+1)-di-trans,octa-cis-undecaprenyl diphosphate + di-trans,octa-cis-undecaprenyl diphosphate + H(+). Its pathway is cell wall biogenesis; peptidoglycan biosynthesis. Its function is as follows. Peptidoglycan polymerase that catalyzes glycan chain elongation from lipid-linked precursors. In Bdellovibrio bacteriovorus (strain ATCC 15356 / DSM 50701 / NCIMB 9529 / HD100), this protein is Biosynthetic peptidoglycan transglycosylase.